Consider the following 653-residue polypeptide: Putative clathrin assembly protein At2g25430 (653 aa).

Positions Val-23 to Gly-159 constitute an ENTH domain. Residues Val-160 to His-171 show a composition bias toward low complexity. The disordered stretch occupies residues Val-160 to Lys-240. The segment covering Ser-172–Arg-186 has biased composition (basic and acidic residues). The segment covering Asn-197–Gly-214 has biased composition (gly residues). Residue Ser-221 is modified to Phosphoserine. Thr-244 is subject to Phosphothreonine. Positions Arg-376 to Glu-389 are enriched in basic and acidic residues. The segment at Arg-376–Pro-431 is disordered. Over residues Val-395–Met-404 the composition is skewed to acidic residues. The segment covering Leu-410–Glu-425 has biased composition (pro residues).

It localises to the membrane. The protein localises to the clathrin-coated pit. It is found in the golgi apparatus. Its subcellular location is the cytoplasmic vesicle. The protein resides in the clathrin-coated vesicle. This chain is Putative clathrin assembly protein At2g25430, found in Arabidopsis thaliana (Mouse-ear cress).